The chain runs to 473 residues: NAC domain-containing protein 68 (473 aa).

An NAC domain is found at 4–154; the sequence is GLIGYRFSPT…KYVVCQVKYK (151 aa). Residues 108-160 mediate DNA binding; sequence IGIKKTLVYHEGKSPHGVRTPWVMHEYHITCLPHHKRKYVVCQVKYKGEAAEI. The disordered stretch occupies residues 326-380; it reads DHMPRKPVTGTIDYSSDSGSDAGSISTTSYQGTSSPNISVGSSSRHLSSCSSTDS. 2 stretches are compositionally biased toward low complexity: residues 340–354 and 364–379; these read SSDSGSDAGSISTTS and SVGSSSRHLSSCSSTD. The chain crosses the membrane as a helical span at residues 446–468; that stretch reads FIYLMKMIIGNIISVLLPVKRLI.

The protein localises to the membrane. It is found in the nucleus. Transcription activator activated by proteolytic cleavage through regulated intramembrane proteolysis (RIP) mediated by calpain or its functional homolog. Regulates cytokinin signaling during cell division. The polypeptide is NAC domain-containing protein 68 (NAC68) (Arabidopsis thaliana (Mouse-ear cress)).